The chain runs to 878 residues: Aconitate hydratase A (878 aa).

3 residues coordinate [4Fe-4S] cluster: Cys426, Cys492, and Cys495.

Belongs to the aconitase/IPM isomerase family. In terms of assembly, monomer. Requires [4Fe-4S] cluster as cofactor.

It carries out the reaction citrate = D-threo-isocitrate. It catalyses the reaction (2S,3R)-3-hydroxybutane-1,2,3-tricarboxylate = 2-methyl-cis-aconitate + H2O. It functions in the pathway carbohydrate metabolism; tricarboxylic acid cycle; isocitrate from oxaloacetate: step 2/2. It participates in organic acid metabolism; propanoate degradation. Functionally, involved in the catabolism of short chain fatty acids (SCFA) via the tricarboxylic acid (TCA)(acetyl degradation route) and probably the 2-methylcitrate cycle I (propionate degradation route). Catalyzes the reversible isomerization of citrate to isocitrate via cis-aconitate. Could catalyze the hydration of 2-methyl-cis-aconitate to yield (2R,3S)-2-methylisocitrate. The apo form of AcnA functions as a RNA-binding regulatory protein. This chain is Aconitate hydratase A (acnA), found in Rickettsia typhi (strain ATCC VR-144 / Wilmington).